The chain runs to 448 residues: Keratin, type I cytoskeletal 27 (448 aa).

Residues 1-73 (MSVRFSSASR…ANEHGLLSGN (73 aa)) form a head region. Residues 74–109 (EKVTMQNLNDRLASYLENVQALEEANADLEQKIKDW) are coil 1A. One can recognise an IF rod domain in the interval 74 to 389 (EKVTMQNLND…RLIDGDEGSC (316 aa)). The interval 110-131 (YEKFGPGSCRGLDHDYSRYFPI) is linker 1. The tract at residues 132 to 223 (IDDLRTQIIS…KNHEEEMQAL (92 aa)) is coil 1B. The interval 224 to 246 (QCAAGGNVNVEMNAAPGVDLTVL) is linker 12. Residues 247–385 (LNNMRAEYEA…ETYCRLIDGD (139 aa)) are coil 2. A tail region spans residues 386–448 (EGSCVKAKGQ…VNKTEQRIPS (63 aa)). The tract at residues 427–448 (SRVHTLEEKSTKVNKTEQRIPS) is disordered. Residues 430–448 (HTLEEKSTKVNKTEQRIPS) show a composition bias toward basic and acidic residues.

Belongs to the intermediate filament family. In terms of assembly, heterotetramer of two type I and two type II keratins. Interacts with KRT6A to form filaments. As to expression, expressed in skin. Expressed in the Henle layer and cuticle of the irs in hair follicle bulb. In the hair follicle, expression was observed in all layers of the irs but was stronger in the Henle layer and cuticle than the Huxley layer until the Henle layer differentiated (at protein level).

It localises to the cytoplasm. In terms of biological role, essential for the proper assembly of type I and type II keratin protein complexes and formation of keratin intermediate filaments in the inner root sheath (irs). In Mus musculus (Mouse), this protein is Keratin, type I cytoskeletal 27.